A 934-amino-acid chain; its full sequence is Protocadherin gamma-C3 (934 aa).

The N-terminal stretch at 1 to 31 is a signal peptide; the sequence is MVPEAWRSGLVSTGRVVGVLLLLGALNKAST. 6 consecutive Cadherin domains span residues 32–135, 136–244, 245–352, 353–457, 458–567, and 572–685; these read VIHY…NPAF, PTQE…APVF, NQSL…APEI, TVTS…PPQS, SQSS…APQV, and PGGS…APRE. The Extracellular portion of the chain corresponds to 32 to 693; the sequence is VIHYEIPEER…REQKKNLTFY (662 aa). N-linked (GlcNAc...) asparagine glycans are attached at residues Asn-245, Asn-424, Asn-478, Asn-550, Asn-615, and Asn-689. A helical membrane pass occupies residues 694 to 714; the sequence is LLLSLILVSVGFVVTVFGVII. Residues 715–934 are Cytoplasmic-facing; the sequence is FKVYKWKQSR…KKKSGKKEKK (220 aa). Disordered stretches follow at residues 804–843 and 904–934; these read ESAPPGQQAPPNTDWRFSQAQRPGTSGSQNGDDTGTWPNN and ATLTNAAGKRDGKAPAGGNGNKKKSGKKEKK. The span at 812-843 shows a compositional bias: polar residues; the sequence is APPNTDWRFSQAQRPGTSGSQNGDDTGTWPNN. Residues 924-934 are compositionally biased toward basic residues; it reads NKKKSGKKEKK.

It is found in the cell membrane. Its function is as follows. Potential calcium-dependent cell-adhesion protein. May be involved in the establishment and maintenance of specific neuronal connections in the brain. The polypeptide is Protocadherin gamma-C3 (PCDHGC3) (Homo sapiens (Human)).